We begin with the raw amino-acid sequence, 517 residues long: Probable cytosol aminopeptidase (517 aa).

Residues lysine 279 and aspartate 284 each contribute to the Mn(2+) site. The active site involves lysine 291. Positions 302, 361, and 363 each coordinate Mn(2+). Arginine 365 is an active-site residue.

The protein belongs to the peptidase M17 family. Requires Mn(2+) as cofactor.

The protein resides in the cytoplasm. The catalysed reaction is Release of an N-terminal amino acid, Xaa-|-Yaa-, in which Xaa is preferably Leu, but may be other amino acids including Pro although not Arg or Lys, and Yaa may be Pro. Amino acid amides and methyl esters are also readily hydrolyzed, but rates on arylamides are exceedingly low.. The enzyme catalyses Release of an N-terminal amino acid, preferentially leucine, but not glutamic or aspartic acids.. In terms of biological role, presumably involved in the processing and regular turnover of intracellular proteins. Catalyzes the removal of unsubstituted N-terminal amino acids from various peptides. This Streptomyces coelicolor (strain ATCC BAA-471 / A3(2) / M145) protein is Probable cytosol aminopeptidase.